We begin with the raw amino-acid sequence, 497 residues long: Pancreatic alpha-amylase (497 aa).

Residue Q1 is modified to Pyrrolidone carboxylic acid. Disulfide bonds link C28–C86, C70–C115, and C141–C160. Residues N100, R158, and D167 each coordinate Ca(2+). Position 195 (R195) interacts with chloride. D197 functions as the Nucleophile in the catalytic mechanism. H201 contributes to the Ca(2+) binding site. The active-site Proton donor is the E233. The chloride site is built by N298 and R337. 2 cysteine pairs are disulfide-bonded: C379-C385 and C451-C463.

Belongs to the glycosyl hydrolase 13 family. Monomer. It depends on Ca(2+) as a cofactor. Requires chloride as cofactor.

Its subcellular location is the secreted. The protein localises to the extracellular space. It carries out the reaction Endohydrolysis of (1-&gt;4)-alpha-D-glucosidic linkages in polysaccharides containing three or more (1-&gt;4)-alpha-linked D-glucose units.. This chain is Pancreatic alpha-amylase, found in Struthio camelus (Common ostrich).